We begin with the raw amino-acid sequence, 304 residues long: Dihydroorotate dehydrogenase B (NAD(+)), catalytic subunit (304 aa).

Residues Ser-22 and 46–47 (KG) each bind FMN. Residues Lys-46 and 70 to 74 (NAIGL) each bind substrate. FMN contacts are provided by Asn-100 and Asn-128. A substrate-binding site is contributed by Asn-128. Cys-131 serves as the catalytic Nucleophile. Residues Lys-166 and Ile-192 each coordinate FMN. 193–194 (NT) is a binding site for substrate. FMN contacts are provided by residues Gly-218, 244 to 245 (GG), and 266 to 267 (GT).

This sequence belongs to the dihydroorotate dehydrogenase family. Type 1 subfamily. In terms of assembly, heterotetramer of 2 PyrK and 2 PyrD type B subunits. The cofactor is FMN.

Its subcellular location is the cytoplasm. It carries out the reaction (S)-dihydroorotate + NAD(+) = orotate + NADH + H(+). It participates in pyrimidine metabolism; UMP biosynthesis via de novo pathway; orotate from (S)-dihydroorotate (NAD(+) route): step 1/1. Catalyzes the conversion of dihydroorotate to orotate with NAD(+) as electron acceptor. This is Dihydroorotate dehydrogenase B (NAD(+)), catalytic subunit (pyrD) from Pelobacter propionicus (strain DSM 2379 / NBRC 103807 / OttBd1).